The primary structure comprises 425 residues: Interferon regulatory factor 8 (425 aa).

The segment at residues 7-114 (GRRLRQWLIE…EPYKVYRIVP (108 aa)) is a DNA-binding region (IRF tryptophan pentad repeat).

Belongs to the IRF family.

It localises to the nucleus. The protein localises to the cytoplasm. Functionally, plays a role as a transcriptional activator or repressor. Specifically binds to the upstream regulatory region of type I IFN and IFN-inducible MHC class I genes (the interferon consensus sequence (ICS)). Plays a regulatory role in cells of the immune system. This is Interferon regulatory factor 8 (IRF8) from Gallus gallus (Chicken).